Reading from the N-terminus, the 575-residue chain is Epsin-1 (575 aa).

A 1,2-diacyl-sn-glycero-3-phospho-(1D-myo-inositol-4,5-bisphosphate) is bound by residues K11, R25, N30, R63, and H73. Positions 12 to 144 (NIVHNYSEAE…RDEDRLREER (133 aa)) constitute an ENTH domain. The interval 150–186 (TKEKLAQTATASSAAVGSGPPPEAEQAWPQSSGEEEL) is disordered. Over residues 157-167 (TATASSAAVGS) the composition is skewed to low complexity. 3 UIM domains span residues 183 to 202 (EEEL…ADQP), 208 to 227 (EDDV…HDKE), and 233 to 252 (GDDL…TGGK). The segment at 264-575 (FTTPAPPQAS…PAPNTNPFLL (312 aa)) is disordered. Repeat copies occupy residues 274-276 (DPW), 294-296 (DPW), 306-308 (DPW), 319-321 (DPW), 332-334 (DPW), 349-351 (DPW), 367-369 (DPW), and 377-379 (DPW). Positions 274-379 (DPWGGPASVP…APAPAFSDPW (106 aa)) are 8 X 3 AA repeats of D-P-W. Low complexity-rich tracts occupy residues 279-299 (PASV…WGGP) and 306-316 (DPWGGAAPTPA). The span at 332-346 (DPWGGTPAPAAGEGP) shows a compositional bias: low complexity. Residues 367–379 (DPWAPAPAFSDPW) show a composition bias toward low complexity. Position 382 is a phosphoserine (S382). A [DE]-X(1,2)-F-X-X-[FL]-X-X-X-R motif motif is present at residues 401-410 (DEFSDFDRLR). Phosphoserine occurs at positions 418 and 419. T420 bears the Phosphothreonine mark. Phosphoserine is present on residues S434, S446, and S453. A compositionally biased stretch (pro residues) spans 453–467 (SPPPAATPTPTPPTR). 3 positions are modified to phosphothreonine: T459, T463, and T469. S472 carries the phosphoserine modification. T493 bears the Phosphothreonine mark. Repeat copies occupy residues 501-503 (NPF) and 517-519 (NPF). Positions 501 to 573 (NPFLPSGAPP…GPPAPNTNPF (73 aa)) are 3 X 3 AA repeats of N-P-F. At R533 the chain carries Omega-N-methylarginine. Over residues 556-569 (GLPPMMPPGPPAPN) the composition is skewed to pro residues. Residues 571–573 (NPF) form repeat 3.

The protein belongs to the epsin family. Monomer. Binds clathrin and ZBTB16/ZNF145. Binds ubiquitinated proteins. Interacts with RALBP1 in a complex also containing NUMB and TFAP2A during interphase and mitosis. Interacts with AP2B1. Interacts with UBQLN2. Interacts with ITSN1. Interacts with AP2A1 and AP2A2. Interacts with REPS2; the interaction is direct. Interacts with EPS15; the interaction is direct. Interacts with ENTREP1. Phosphorylated on serine and/or threonine residues in mitotic cells. Phosphorylation reduces interaction with REPS2, AP-2 and the membrane fraction. Depolarization of synaptosomes results in dephosphorylation. In terms of processing, ubiquitinated.

Its subcellular location is the cytoplasm. The protein localises to the cell membrane. The protein resides in the nucleus. It is found in the membrane. It localises to the clathrin-coated pit. Its function is as follows. Binds to membranes enriched in phosphatidylinositol 4,5-bisphosphate (PtdIns(4,5)P2). Modifies membrane curvature and facilitates the formation of clathrin-coated invaginations. Regulates receptor-mediated endocytosis. This chain is Epsin-1 (Epn1), found in Mus musculus (Mouse).